We begin with the raw amino-acid sequence, 1870 residues long: Non-reducing polyketide synthase pkgA (1870 aa).

Residues 40–279 (IQDLIRRLHR…SRHSALPISG (240 aa)) form an N-terminal acylcarrier protein transacylase domain (SAT) region. Positions 416-838 (DAKLAVVGMA…GGNTTLLLED (423 aa)) constitute a Ketosynthase family 3 (KS3) domain. A disordered region spans residues 453 to 492 (PPDRFDLDAHFDPSGEKENTTTKGSQSNRPLSRQAEQTDP). Over residues 455-472 (DRFDLDAHFDPSGEKENT) the composition is skewed to basic and acidic residues. The span at 473–492 (TTKGSQSNRPLSRQAEQTDP) shows a compositional bias: polar residues. Active-site for beta-ketoacyl synthase activity residues include Cys577, His712, and His755. A malonyl-CoA:ACP transacylase (MAT) domain region spans residues 947 to 1282 (AFSGQGCLYH…QSFASLRRGD (336 aa)). The disordered stretch occupies residues 1004–1027 (RCPHRESTPSSDASHDSNTNRTST). Residues 1011-1027 (TPSSDASHDSNTNRTST) show a composition bias toward polar residues. The tract at residues 1364–1704 (TSSVQQIIFE…PRALMPVLFP (341 aa)) is product template (PT) domain. The interval 1368-1502 (QQIIFEEYDE…ATVCYEEAQD (135 aa)) is N-terminal hotdog fold. Residues 1368 to 1700 (QQIIFEEYDE…FKAVPRALMP (333 aa)) form the PKS/mFAS DH domain. The Proton acceptor; for dehydratase activity role is filled by His1400. The segment at 1538–1700 (KGGPRVNNFF…FKAVPRALMP (163 aa)) is C-terminal hotdog fold. Asp1602 serves as the catalytic Proton donor; for dehydratase activity. The Carrier domain occupies 1795-1870 (QSQNAQATAC…VQDLVTWLSK (76 aa)). Ser1832 is modified (O-(pantetheine 4'-phosphoryl)serine).

The cofactor is pantetheine 4'-phosphate.

It carries out the reaction holo-[ACP] + 6 malonyl-CoA + acetyl-CoA + 6 H(+) = 3,5,7,9,11,13-hexaoxotetradecanoyl-[ACP] + 6 CO2 + 7 CoA. It catalyses the reaction holo-[ACP] + 5 malonyl-CoA + acetyl-CoA + 5 H(+) = 3,5,7,9,11-pentaoxododecanoyl-[ACP] + 5 CO2 + 6 CoA. It participates in secondary metabolite biosynthesis. Non-reducing polyketide synthase; part of the pkg gene cluster that mediates the biosynthesis of dihydrocitreoisocoumarin and 6,8-dihydroxy-3-(2-oxopropyl)-isocoumarin. The non-reducing polyketide synthase pkgA performs the condensation of one acetyl-CoA starter unit with 6 and 5 malonyl-CoA units, respectively. As pkgA lacks a releasing domain, the thioesterase pkgB is necessary to break the thioester bond and release dihydrocitreoisocoumarin and 6,8-dihydroxy-3-(2-oxopropyl)-isocoumarin from pkgA. This is Non-reducing polyketide synthase pkgA from Emericella nidulans (strain FGSC A4 / ATCC 38163 / CBS 112.46 / NRRL 194 / M139) (Aspergillus nidulans).